The following is a 285-amino-acid chain: RNA polymerase sigma factor RpoH (285 aa).

Residues 53–122 are sigma-70 factor domain-2; the sequence is LILSHLRFVV…IHEYVLRNWR (70 aa). The Interaction with polymerase core subunit RpoC motif lies at 77–80; sequence DLVQ. The tract at residues 229–280 is sigma-70 factor domain-4; the sequence is ALASLDERSQHIVRSRWLDDDKATLQDLAEMYGVSAERIRQLEKNAMKKLKM. Residues 253 to 272 constitute a DNA-binding region (H-T-H motif); the sequence is LQDLAEMYGVSAERIRQLEK.

It belongs to the sigma-70 factor family. RpoH subfamily. In terms of assembly, interacts with the RNA polymerase core enzyme.

It is found in the cytoplasm. Its function is as follows. Sigma factors are initiation factors that promote the attachment of RNA polymerase to specific initiation sites and are then released. This sigma factor is involved in regulation of expression of heat shock genes. The polypeptide is RNA polymerase sigma factor RpoH (Vibrio vulnificus (strain CMCP6)).